A 288-amino-acid polypeptide reads, in one-letter code: MNNIIDGKALANEILADLKLEIQELTSQTNASPKLAIVLVGDNPASIIYVRHKIKNAHKIGIYTLLINLSATIHTNDLISKINELNLDNEISGIIVQLPLPSSIDKNKILSAVSPSKDIDGFHPLNVGYLHSGISQGFIPCTALGCLAAIKKYEPNLTGKNVVIIGRSNIVGKPLSALLLKENCSVTICHSKTHNLRSITSKADIVVAAIGSPLKLTAEYFNPKSIVIDVGINRISSNKIIGDVDFENVQSKVQYITPVPGGIGPMTIAFLLKNTVKAFKDSLYTLDT.

NADP(+) is bound by residues 166 to 168 (GRS), Ser-191, and Ile-232.

It belongs to the tetrahydrofolate dehydrogenase/cyclohydrolase family. As to quaternary structure, homodimer.

It carries out the reaction (6R)-5,10-methylene-5,6,7,8-tetrahydrofolate + NADP(+) = (6R)-5,10-methenyltetrahydrofolate + NADPH. The catalysed reaction is (6R)-5,10-methenyltetrahydrofolate + H2O = (6R)-10-formyltetrahydrofolate + H(+). The protein operates within one-carbon metabolism; tetrahydrofolate interconversion. Functionally, catalyzes the oxidation of 5,10-methylenetetrahydrofolate to 5,10-methenyltetrahydrofolate and then the hydrolysis of 5,10-methenyltetrahydrofolate to 10-formyltetrahydrofolate. In Rickettsia africae (strain ESF-5), this protein is Bifunctional protein FolD.